The sequence spans 364 residues: tRNA-specific 2-thiouridylase MnmA (364 aa).

Residues 13 to 20 (GMSGGVDS) and M39 contribute to the ATP site. The interval 99 to 101 (NPD) is interaction with target base in tRNA. The active-site Nucleophile is C104. C104 and C200 are joined by a disulfide. G128 contributes to the ATP binding site. The interval 150–152 (KDQ) is interaction with tRNA. C200 functions as the Cysteine persulfide intermediate in the catalytic mechanism. The interval 310-311 (RY) is interaction with tRNA.

It belongs to the MnmA/TRMU family.

Its subcellular location is the cytoplasm. The catalysed reaction is S-sulfanyl-L-cysteinyl-[protein] + uridine(34) in tRNA + AH2 + ATP = 2-thiouridine(34) in tRNA + L-cysteinyl-[protein] + A + AMP + diphosphate + H(+). In terms of biological role, catalyzes the 2-thiolation of uridine at the wobble position (U34) of tRNA, leading to the formation of s(2)U34. In Alkaliphilus oremlandii (strain OhILAs) (Clostridium oremlandii (strain OhILAs)), this protein is tRNA-specific 2-thiouridylase MnmA.